The following is a 720-amino-acid chain: Exocyst complex component 7 (720 aa).

Coiled-coil stretches lie at residues 5-34 (EDAS…SLEK) and 63-83 (VHKQ…TLSN). Phosphoserine is present on S133. The interval 249–268 (SPAVQTKRKETPTKKAPKRP) is disordered.

This sequence belongs to the EXO70 family.

Its subcellular location is the cytoplasm. The protein localises to the cytosol. It is found in the cell membrane. The protein resides in the midbody. It localises to the midbody ring. Component of the exocyst complex involved in the docking of exocytic vesicles with fusion sites on the plasma membrane. It is required for neuron survival and plays an essential role in telencephalon development. The chain is Exocyst complex component 7 (exoc7) from Danio rerio (Zebrafish).